The primary structure comprises 352 residues: DNA ADP-ribosyl glycohydrolase (352 aa).

The Macro domain maps to 1 to 155 (MITYGSGDLL…IYPPSGGSRA (155 aa)). Residues 8-9 (DL), 20-22 (TVN), 31-34 (IALQ), and threonine 79 each bind ADP-D-ribose. Residue lysine 80 is the Nucleophile of the active site. 117-121 (GVGNG) contacts ADP-D-ribose. Residues 164 to 352 (MTWGRAVILE…VALDRILMTA (189 aa)) form an interaction with DarT region.

This sequence belongs to the DarG ADP-ribosyl glycohydrolase family. Interacts (via C-terminus) with cognate toxin DarT; this heterodimeric complex neutralizes the toxic effect of DarT by preventing ssDNA binding to DarT and consequently inactivating the toxin by direct protein-protein interactions.

It carries out the reaction an N-(ADP-alpha-D-ribosyl)-thymidine in DNA + H2O = a thymidine in DNA + ADP-D-ribose. Its function is as follows. Antitoxin component of the hybrid type II/IV toxin-antitoxin (TA) system DarTG, which plays a crucial role in controlling bacterial growth and bacteriophage infection. De-ADP-ribosylates DNA (probably) modified on thymidine by its cognate toxin DarT, which neutralizes the activity of cognate toxin DarT. The polypeptide is DNA ADP-ribosyl glycohydrolase (Mycobacterium bovis (strain BCG / Pasteur 1173P2)).